Reading from the N-terminus, the 29-residue chain is Cyclotide mela-4 (29 aa).

Residues 1–29 constitute a cross-link (cyclopeptide (Gly-Asn)); the sequence is GKPICGETCFKGKCYTPGCTCSYPICKKN. Intrachain disulfides connect Cys5-Cys19, Cys9-Cys21, and Cys14-Cys26.

This is a cyclic peptide. In terms of processing, contains 3 disulfide bonds.

Its function is as follows. Probably participates in a plant defense mechanism (Potential). Binds to and induces leakage in phospholipd membranes, particularly ones containing 1-palmitoyl-2-oleophosphatidylethanolamine (POPE). In vitro, displays cytotoxicity against cultured cells. Not active against Gram-negative bacterium E.coli ATCC 25922 or Gram-positive bacterium S.aureus ATCC 25923 up to a concentration of 64 uM. This chain is Cyclotide mela-4, found in Melicytus latifolius (Norfolk Island mahoe).